The primary structure comprises 260 residues: uncharacterized protein (260 aa).

The first 22 residues, 1–22 (MGYLKRFALYISILVLIVMVAG), serve as a signal peptide directing secretion. Cys-23 carries N-palmitoyl cysteine lipidation. A lipid anchor (S-diacylglycerol cysteine) is attached at Cys-23.

This sequence belongs to the staphylococcal tandem lipoprotein family.

It is found in the cell membrane. This is an uncharacterized protein from Staphylococcus aureus (strain bovine RF122 / ET3-1).